Here is an 876-residue protein sequence, read N- to C-terminus: Translation initiation factor IF-2 (876 aa).

A tr-type G domain is found at 378 to 547 (TRPPIITIMG…LTQSEMLELK (170 aa)). Positions 387 to 394 (GHVDHGKT) are G1. 387 to 394 (GHVDHGKT) contributes to the GTP binding site. The G2 stretch occupies residues 412-416 (RITQH). Residues 433 to 436 (DTPG) are G3. Residues 433–437 (DTPGH) and 487–490 (NKID) each bind GTP. The interval 487–490 (NKID) is G4. The G5 stretch occupies residues 523 to 525 (SAK).

The protein belongs to the TRAFAC class translation factor GTPase superfamily. Classic translation factor GTPase family. IF-2 subfamily.

The protein localises to the cytoplasm. Its function is as follows. One of the essential components for the initiation of protein synthesis. Protects formylmethionyl-tRNA from spontaneous hydrolysis and promotes its binding to the 30S ribosomal subunits. Also involved in the hydrolysis of GTP during the formation of the 70S ribosomal complex. This Buchnera aphidicola subsp. Baizongia pistaciae (strain Bp) protein is Translation initiation factor IF-2.